A 226-amino-acid polypeptide reads, in one-letter code: Insulin-like growth factor-binding protein 6 (226 aa).

The N-terminal stretch at methionine 1 to serine 25 is a signal peptide. The 74-residue stretch at alanine 26–alanine 99 folds into the IGFBP N-terminal domain. 4 disulfides stabilise this stretch: cysteine 30/cysteine 33, cysteine 49/cysteine 55, cysteine 63/cysteine 76, and cysteine 70/cysteine 96. The tract at residues glycine 92–cysteine 148 is disordered. Over residues glycine 101–lysine 126 the composition is skewed to basic and acidic residues. In terms of domain architecture, Thyroglobulin type-1 spans methionine 145 to cysteine 220. Cystine bridges form between cysteine 148–cysteine 176, cysteine 187–cysteine 198, and cysteine 200–cysteine 220. Residues glycine 205–glycine 226 form a disordered region. Polar residues predominate over residues glycine 214–glycine 226.

In terms of assembly, interacts (via C-terminal domain) with PHB2. In terms of processing, O-glycosylated.

The protein resides in the secreted. IGF-binding proteins prolong the half-life of the IGFs and have been shown to either inhibit or stimulate the growth promoting effects of the IGFs on cell culture. They alter the interaction of IGFs with their cell surface receptors. Activates the MAPK signaling pathway and induces cell migration. The chain is Insulin-like growth factor-binding protein 6 (Igfbp6) from Rattus norvegicus (Rat).